The chain runs to 505 residues: AMP phosphorylase (505 aa).

AMP is bound by residues Gly-169, Ser-195–Gly-200, and Thr-204. Asp-257 functions as the Proton donor in the catalytic mechanism. Residues Ser-265 and Lys-289 each contribute to the AMP site.

It belongs to the thymidine/pyrimidine-nucleoside phosphorylase family. Type 2 subfamily.

The catalysed reaction is AMP + phosphate = alpha-D-ribose 1,5-bisphosphate + adenine. It carries out the reaction CMP + phosphate = cytosine + alpha-D-ribose 1,5-bisphosphate. It catalyses the reaction UMP + phosphate = alpha-D-ribose 1,5-bisphosphate + uracil. Catalyzes the conversion of AMP and phosphate to adenine and ribose 1,5-bisphosphate (R15P). Exhibits phosphorylase activity toward CMP and UMP in addition to AMP. Functions in an archaeal AMP degradation pathway, together with R15P isomerase and RubisCO. In Methanocorpusculum labreanum (strain ATCC 43576 / DSM 4855 / Z), this protein is AMP phosphorylase.